The chain runs to 215 residues: Nucleoside triphosphate pyrophosphatase (215 aa).

Belongs to the Maf family. The cofactor is a divalent metal cation.

The protein localises to the cytoplasm. The catalysed reaction is a ribonucleoside 5'-triphosphate + H2O = a ribonucleoside 5'-phosphate + diphosphate + H(+). It catalyses the reaction a 2'-deoxyribonucleoside 5'-triphosphate + H2O = a 2'-deoxyribonucleoside 5'-phosphate + diphosphate + H(+). Functionally, nucleoside triphosphate pyrophosphatase. May have a dual role in cell division arrest and in preventing the incorporation of modified nucleotides into cellular nucleic acids. In Rickettsia conorii (strain ATCC VR-613 / Malish 7), this protein is Nucleoside triphosphate pyrophosphatase.